The following is a 397-amino-acid chain: Nicotinate phosphoribosyltransferase (397 aa).

Phosphohistidine; by autocatalysis is present on His221.

It belongs to the NAPRTase family. Transiently phosphorylated on a His residue during the reaction cycle. Phosphorylation strongly increases the affinity for substrates and increases the rate of nicotinate D-ribonucleotide production. Dephosphorylation regenerates the low-affinity form of the enzyme, leading to product release.

The enzyme catalyses nicotinate + 5-phospho-alpha-D-ribose 1-diphosphate + ATP + H2O = nicotinate beta-D-ribonucleotide + ADP + phosphate + diphosphate. It functions in the pathway cofactor biosynthesis; NAD(+) biosynthesis; nicotinate D-ribonucleotide from nicotinate: step 1/1. Its function is as follows. Catalyzes the synthesis of beta-nicotinate D-ribonucleotide from nicotinate and 5-phospho-D-ribose 1-phosphate at the expense of ATP. This is Nicotinate phosphoribosyltransferase from Herminiimonas arsenicoxydans.